Reading from the N-terminus, the 186-residue chain is Ribosome-recycling factor (186 aa).

Belongs to the RRF family.

The protein localises to the cytoplasm. Its function is as follows. Responsible for the release of ribosomes from messenger RNA at the termination of protein biosynthesis. May increase the efficiency of translation by recycling ribosomes from one round of translation to another. In Wolinella succinogenes (strain ATCC 29543 / DSM 1740 / CCUG 13145 / JCM 31913 / LMG 7466 / NCTC 11488 / FDC 602W) (Vibrio succinogenes), this protein is Ribosome-recycling factor.